We begin with the raw amino-acid sequence, 333 residues long: Large ribosomal subunit protein uL3 (333 aa).

Basic residues-rich tracts occupy residues M1–R10 and P17–P26. Positions M1 to R29 are disordered.

This sequence belongs to the universal ribosomal protein uL3 family. In terms of assembly, part of the 50S ribosomal subunit. Forms a cluster with proteins L14 and L24e.

Its function is as follows. One of the primary rRNA binding proteins, it binds directly near the 3'-end of the 23S rRNA, where it nucleates assembly of the 50S subunit. In Methanococcus aeolicus (strain ATCC BAA-1280 / DSM 17508 / OCM 812 / Nankai-3), this protein is Large ribosomal subunit protein uL3.